Here is a 172-residue protein sequence, read N- to C-terminus: Large ribosomal subunit protein uL10 (172 aa).

Belongs to the universal ribosomal protein uL10 family. Part of the ribosomal stalk of the 50S ribosomal subunit. The N-terminus interacts with L11 and the large rRNA to form the base of the stalk. The C-terminus forms an elongated spine to which L12 dimers bind in a sequential fashion forming a multimeric L10(L12)X complex.

Functionally, forms part of the ribosomal stalk, playing a central role in the interaction of the ribosome with GTP-bound translation factors. The chain is Large ribosomal subunit protein uL10 from Francisella tularensis subsp. holarctica (strain FTNF002-00 / FTA).